The primary structure comprises 500 residues: Putative (R)-citramalate synthase CimA (500 aa).

A Pyruvate carboxyltransferase domain is found at Leu9–Tyr258.

Belongs to the alpha-IPM synthase/homocitrate synthase family. In terms of assembly, homodimer.

It catalyses the reaction pyruvate + acetyl-CoA + H2O = (3R)-citramalate + CoA + H(+). The protein operates within amino-acid biosynthesis; L-isoleucine biosynthesis; 2-oxobutanoate from pyruvate: step 1/3. Functionally, catalyzes the condensation of pyruvate and acetyl-coenzyme A to form (R)-citramalate. In Methanosphaerula palustris (strain ATCC BAA-1556 / DSM 19958 / E1-9c), this protein is Putative (R)-citramalate synthase CimA.